Consider the following 75-residue polypeptide: Veswaprin-c (75 aa).

Residues 1-24 form the signal peptide; the sequence is MSSGGLLLLLGLLTLWAELTPVSS. In terms of domain architecture, WAP spans 27 to 72; the sequence is RPKKPGLCPPRPQKPPCVRECKNDWRCPGERKCCRYGCIYECRDPI. Intrachain disulfides connect Cys34–Cys60, Cys43–Cys64, Cys47–Cys59, and Cys53–Cys68.

It belongs to the venom waprin family. Expressed by the venom gland.

The protein resides in the secreted. In terms of biological role, damages membranes of susceptible bacteria. Has no hemolytic activity. Not toxic to mice. Does not inhibit the proteinases elastase and cathepsin G. The chain is Veswaprin-c from Demansia vestigiata (Lesser black whip snake).